We begin with the raw amino-acid sequence, 131 residues long: Guanyl-specific ribonuclease F1 (131 aa).

The N-terminal stretch at 1-25 (MLFFKSIASLAALVSLAVASPIESR) is a signal peptide. Gln26 carries the pyrrolidone carboxylic acid modification. Disulfide bonds link Cys31/Cys127 and Cys49/Cys108. His65 is an active-site residue. The Proton acceptor role is filled by Glu83. His116 serves as the catalytic Proton donor.

The protein belongs to the ribonuclease N1/T1 family.

It catalyses the reaction [RNA] containing guanosine + H2O = an [RNA fragment]-3'-guanosine-3'-phosphate + a 5'-hydroxy-ribonucleotide-3'-[RNA fragment].. The protein is Guanyl-specific ribonuclease F1 of Fusarium fujikuroi (Bakanae and foot rot disease fungus).